The chain runs to 303 residues: Elongation factor Ts (303 aa).

The involved in Mg(2+) ion dislocation from EF-Tu stretch occupies residues 81-84; it reads TDFV.

The protein belongs to the EF-Ts family.

It is found in the cytoplasm. Its function is as follows. Associates with the EF-Tu.GDP complex and induces the exchange of GDP to GTP. It remains bound to the aminoacyl-tRNA.EF-Tu.GTP complex up to the GTP hydrolysis stage on the ribosome. The polypeptide is Elongation factor Ts (Mesomycoplasma hyopneumoniae (strain 232) (Mycoplasma hyopneumoniae)).